The following is a 47-amino-acid chain: Sperm protamine P1 (47 aa).

This sequence belongs to the protamine P1 family. Testis.

The protein resides in the nucleus. The protein localises to the chromosome. Protamines substitute for histones in the chromatin of sperm during the haploid phase of spermatogenesis. They compact sperm DNA into a highly condensed, stable and inactive complex. This is Sperm protamine P1 (PRM1) from Galeopterus variegatus (Malayan flying lemur).